The chain runs to 475 residues: Bifunctional protein HldE (475 aa).

The segment at 1-317 is ribokinase; the sequence is MQYSAQFNRA…ENAIHGRTTA (317 aa). An ATP-binding site is contributed by 194-197; it reads NMSE. Aspartate 263 is an active-site residue. A cytidylyltransferase region spans residues 343-475; it reads MTNGCFDILH…VIKKIQQLKE (133 aa).

The protein in the N-terminal section; belongs to the carbohydrate kinase PfkB family. It in the C-terminal section; belongs to the cytidylyltransferase family. Homodimer.

It carries out the reaction D-glycero-beta-D-manno-heptose 7-phosphate + ATP = D-glycero-beta-D-manno-heptose 1,7-bisphosphate + ADP + H(+). The catalysed reaction is D-glycero-beta-D-manno-heptose 1-phosphate + ATP + H(+) = ADP-D-glycero-beta-D-manno-heptose + diphosphate. The protein operates within nucleotide-sugar biosynthesis; ADP-L-glycero-beta-D-manno-heptose biosynthesis; ADP-L-glycero-beta-D-manno-heptose from D-glycero-beta-D-manno-heptose 7-phosphate: step 1/4. Its pathway is nucleotide-sugar biosynthesis; ADP-L-glycero-beta-D-manno-heptose biosynthesis; ADP-L-glycero-beta-D-manno-heptose from D-glycero-beta-D-manno-heptose 7-phosphate: step 3/4. Catalyzes the phosphorylation of D-glycero-D-manno-heptose 7-phosphate at the C-1 position to selectively form D-glycero-beta-D-manno-heptose-1,7-bisphosphate. Its function is as follows. Catalyzes the ADP transfer from ATP to D-glycero-beta-D-manno-heptose 1-phosphate, yielding ADP-D-glycero-beta-D-manno-heptose. In Histophilus somni (strain 129Pt) (Haemophilus somnus), this protein is Bifunctional protein HldE.